The following is a 486-amino-acid chain: N-succinylglutamate 5-semialdehyde dehydrogenase (486 aa).

Residue 220 to 225 (GSSRTG) coordinates NAD(+). Active-site residues include Glu-243 and Cys-277.

This sequence belongs to the aldehyde dehydrogenase family. AstD subfamily.

It catalyses the reaction N-succinyl-L-glutamate 5-semialdehyde + NAD(+) + H2O = N-succinyl-L-glutamate + NADH + 2 H(+). It participates in amino-acid degradation; L-arginine degradation via AST pathway; L-glutamate and succinate from L-arginine: step 4/5. Catalyzes the NAD-dependent reduction of succinylglutamate semialdehyde into succinylglutamate. The chain is N-succinylglutamate 5-semialdehyde dehydrogenase from Shewanella baltica (strain OS155 / ATCC BAA-1091).